The following is a 282-amino-acid chain: Pantothenate synthetase (282 aa).

Residue 26-33 coordinates ATP; that stretch reads MGNLHDGH. His33 functions as the Proton donor in the catalytic mechanism. Gln57 is a binding site for (R)-pantoate. Position 57 (Gln57) interacts with beta-alanine. 148–151 serves as a coordination point for ATP; that stretch reads GKKD. Gln154 serves as a coordination point for (R)-pantoate. 185 to 188 lines the ATP pocket; that stretch reads LSSR.

This sequence belongs to the pantothenate synthetase family. Homodimer.

The protein resides in the cytoplasm. It catalyses the reaction (R)-pantoate + beta-alanine + ATP = (R)-pantothenate + AMP + diphosphate + H(+). It functions in the pathway cofactor biosynthesis; (R)-pantothenate biosynthesis; (R)-pantothenate from (R)-pantoate and beta-alanine: step 1/1. In terms of biological role, catalyzes the condensation of pantoate with beta-alanine in an ATP-dependent reaction via a pantoyl-adenylate intermediate. This Polaromonas sp. (strain JS666 / ATCC BAA-500) protein is Pantothenate synthetase.